A 73-amino-acid chain; its full sequence is UPF0346 protein Lreu_0775 (73 aa).

This sequence belongs to the UPF0346 family.

This is UPF0346 protein Lreu_0775 from Limosilactobacillus reuteri (strain DSM 20016) (Lactobacillus reuteri).